Here is a 347-residue protein sequence, read N- to C-terminus: Phenylalanine--tRNA ligase alpha subunit (347 aa).

Glu-265 is a binding site for Mg(2+).

This sequence belongs to the class-II aminoacyl-tRNA synthetase family. Phe-tRNA synthetase alpha subunit type 1 subfamily. As to quaternary structure, tetramer of two alpha and two beta subunits. Requires Mg(2+) as cofactor.

The protein localises to the cytoplasm. The catalysed reaction is tRNA(Phe) + L-phenylalanine + ATP = L-phenylalanyl-tRNA(Phe) + AMP + diphosphate + H(+). The polypeptide is Phenylalanine--tRNA ligase alpha subunit (Wolbachia sp. subsp. Brugia malayi (strain TRS)).